The primary structure comprises 9159 residues: Halomucin (9159 aa).

A signal peptide spans Met1–Ala30. C-type lectin domains lie at Thr644–Glu776 and Tyr929–Gly1060. Polar residues predominate over residues Gln1310–Leu1332. The tract at residues Gln1310–Thr1351 is disordered. The segment at Val1756–Leu3380 is V-G-G-L motif-rich region. 8 disordered regions span residues Gly3484–Gln3514, Glu4878–Ala4912, Thr6570–Gln6589, Thr7047–Thr7097, Ala7660–Gly7702, Ile7888–Leu7923, Ser8212–Asp8237, and Asp8369–Thr8614. Gly residues predominate over residues Gly3495 to Ser3505. Residues Tyr4880–Asp4890 are compositionally biased toward basic and acidic residues. Polar residues-rich tracts occupy residues Pro7048–Asp7057 and Gly7068–Ser7078. Residues Asp7079 to Ile7092 show a composition bias toward acidic residues. The segment covering Val7681 to Glu7698 has biased composition (polar residues). The region spanning Pro7686–Gly7793 is the Cadherin domain. Composition is skewed to acidic residues over residues Ile7888–Glu7898 and Asp7905–Glu7920. The segment covering Ala8378 to Asp8390 has biased composition (acidic residues). Composition is skewed to low complexity over residues Asp8391–Asn8529 and Ser8538–Ser8548. Gly residues-rich tracts occupy residues Glu8549–Ser8566 and Ala8574–Ser8608.

Post-translationally, probably glycosylated with sugar containing sialic acid. This may further contribute to its overall negative charge, thereby creating an aqueous shield covering the cells.

It is found in the secreted. May protect the organism from desiccation stress. May also contribute to the rigidity and maintenance of the unique square cell morphology of H.walsbyi. The polypeptide is Halomucin (hmu) (Haloquadratum walsbyi (strain DSM 16790 / HBSQ001)).